The following is a 280-amino-acid chain: Ribosomal RNA small subunit methyltransferase A (280 aa).

Residues N27, L29, G54, E76, D102, and N122 each contribute to the S-adenosyl-L-methionine site.

Belongs to the class I-like SAM-binding methyltransferase superfamily. rRNA adenine N(6)-methyltransferase family. RsmA subfamily.

It is found in the cytoplasm. It catalyses the reaction adenosine(1518)/adenosine(1519) in 16S rRNA + 4 S-adenosyl-L-methionine = N(6)-dimethyladenosine(1518)/N(6)-dimethyladenosine(1519) in 16S rRNA + 4 S-adenosyl-L-homocysteine + 4 H(+). Functionally, specifically dimethylates two adjacent adenosines (A1518 and A1519) in the loop of a conserved hairpin near the 3'-end of 16S rRNA in the 30S particle. May play a critical role in biogenesis of 30S subunits. This Oleidesulfovibrio alaskensis (strain ATCC BAA-1058 / DSM 17464 / G20) (Desulfovibrio alaskensis) protein is Ribosomal RNA small subunit methyltransferase A.